The following is a 224-amino-acid chain: Fibrillarin-like rRNA/tRNA 2'-O-methyltransferase (224 aa).

S-adenosyl-L-methionine contacts are provided by residues 82–83 (TT), 100–101 (EF), 125–126 (DA), and 145–148 (DVAQ).

This sequence belongs to the methyltransferase superfamily. Fibrillarin family. As to quaternary structure, interacts with nop5. Component of box C/D small ribonucleoprotein (sRNP) particles that contain rpl7ae, FlpA and nop5, plus a guide RNA.

In terms of biological role, involved in pre-rRNA and tRNA processing. Utilizes the methyl donor S-adenosyl-L-methionine to catalyze the site-specific 2'-hydroxyl methylation of ribose moieties in rRNA and tRNA. Site specificity is provided by a guide RNA that base pairs with the substrate. Methylation occurs at a characteristic distance from the sequence involved in base pairing with the guide RNA. In Methanothermobacter thermautotrophicus (strain ATCC 29096 / DSM 1053 / JCM 10044 / NBRC 100330 / Delta H) (Methanobacterium thermoautotrophicum), this protein is Fibrillarin-like rRNA/tRNA 2'-O-methyltransferase.